Reading from the N-terminus, the 468-residue chain is Ribulose bisphosphate carboxylase large chain (468 aa).

At Lys-7 the chain carries N6,N6,N6-trimethyllysine. Positions 116 and 166 each coordinate substrate. Catalysis depends on Lys-168, which acts as the Proton acceptor. Lys-170 serves as a coordination point for substrate. Mg(2+)-binding residues include Lys-194, Asp-196, and Glu-197. An N6-carboxylysine modification is found at Lys-194. Residue His-287 is the Proton acceptor of the active site. Residues Arg-288, His-320, and Ser-372 each contribute to the substrate site.

This sequence belongs to the RuBisCO large chain family. Type I subfamily. As to quaternary structure, heterohexadecamer of 8 large chains and 8 small chains; disulfide-linked. The disulfide link is formed within the large subunit homodimers. It depends on Mg(2+) as a cofactor. In terms of processing, the disulfide bond which can form in the large chain dimeric partners within the hexadecamer appears to be associated with oxidative stress and protein turnover.

The protein localises to the plastid. It is found in the chloroplast. It catalyses the reaction 2 (2R)-3-phosphoglycerate + 2 H(+) = D-ribulose 1,5-bisphosphate + CO2 + H2O. It carries out the reaction D-ribulose 1,5-bisphosphate + O2 = 2-phosphoglycolate + (2R)-3-phosphoglycerate + 2 H(+). In terms of biological role, ruBisCO catalyzes two reactions: the carboxylation of D-ribulose 1,5-bisphosphate, the primary event in carbon dioxide fixation, as well as the oxidative fragmentation of the pentose substrate in the photorespiration process. Both reactions occur simultaneously and in competition at the same active site. In Cornus alternifolia (Pagoda dogwood), this protein is Ribulose bisphosphate carboxylase large chain.